Reading from the N-terminus, the 809-residue chain is Probable replication endonuclease from prophage-like region (809 aa).

Catalysis depends on O-(5'-phospho-DNA)-tyrosine intermediate residues tyrosine 503 and tyrosine 507.

It belongs to the phage GPA family.

Possible endonuclease which induces a single-strand cut and initiates DNA replication. The polypeptide is Probable replication endonuclease from prophage-like region (Salmonella typhimurium (strain LT2 / SGSC1412 / ATCC 700720)).